Here is a 179-residue protein sequence, read N- to C-terminus: Interleukin-22 (179 aa).

Positions 1–33 (MAVLQKSMSFSLMGTLAASCLLLIALWAQEANA) are cleaved as a signal peptide. 2 disulfides stabilise this stretch: C40–C132 and C89–C178. N-linked (GlcNAc...) asparagine glycosylation is found at N54, N68, and N97.

The protein belongs to the IL-10 family.

It localises to the secreted. Its function is as follows. Cytokine that plays a critical role in modulating tissue responses during inflammation. Plays an essential role in the regeneration of epithelial cells to maintain barrier function after injury and for the prevention of further tissue damage. Unlike most of the cytokines, has no effect on immune cells. Signals through a heterodimeric receptor composed of two subunits, the specific receptor IL22RA1 which is present on non-immune cells in many organs and the shared subunit IL10RB. Ligation of IL22RA1 with IL22 induces activation of the tyrosine kinases JAK1 and TYK2, which in turn activates STAT3. In turn, promotes cell survival and proliferation through STAT3, ERK1/2 and PI3K/AKT pathways. Promotes phosphorylation of GSK3B at 'Ser-9' and CTTN. Promotes epithelial cell spreading. The chain is Interleukin-22 (Il22) from Mus musculus (Mouse).